The primary structure comprises 206 residues: Large ribosomal subunit protein uL4 (206 aa).

The tract at residues 45–76 (RQGNQSAKTRAEVSGGGKKPWRQKGTGRARQG) is disordered.

The protein belongs to the universal ribosomal protein uL4 family. As to quaternary structure, part of the 50S ribosomal subunit.

One of the primary rRNA binding proteins, this protein initially binds near the 5'-end of the 23S rRNA. It is important during the early stages of 50S assembly. It makes multiple contacts with different domains of the 23S rRNA in the assembled 50S subunit and ribosome. Its function is as follows. Forms part of the polypeptide exit tunnel. This chain is Large ribosomal subunit protein uL4, found in Clostridium novyi (strain NT).